The sequence spans 190 residues: Secreted isochorismatase effector Isc1 (190 aa).

Residues Asp26, Lys100, and Cys133 contribute to the active site.

It belongs to the isochorismatase family.

It is found in the secreted. The protein resides in the host cytoplasm. The protein localises to the host nucleus. The enzyme catalyses isochorismate + H2O = (2S,3S)-2,3-dihydroxy-2,3-dihydrobenzoate + pyruvate. In terms of biological role, secreted isochorismatase required for full virulence of V.dahliae. Suppresses salicylate-mediated innate immunity of the host by disrupting the plant salicylate metabolism pathway via hydrolysis of its isochorismate precursor. The polypeptide is Secreted isochorismatase effector Isc1 (Verticillium dahliae (strain VdLs.17 / ATCC MYA-4575 / FGSC 10137) (Verticillium wilt)).